The primary structure comprises 226 residues: Thaumatin-like protein (226 aa).

The signal sequence occupies residues 1–24 (MNFSKNLPLLVSLWAITFFAYTHA). 8 disulfide bridges follow: cysteine 33/cysteine 225, cysteine 74/cysteine 84, cysteine 89/cysteine 95, cysteine 140/cysteine 214, cysteine 145/cysteine 197, cysteine 153/cysteine 163, cysteine 167/cysteine 176, and cysteine 177/cysteine 184.

The protein belongs to the thaumatin family. As to expression, expressed in fruits.

The protein resides in the secreted. Its function is as follows. 3D-structure modeling suggests it may have endo-(1,3)-beta-glucanase activity. The protein is Thaumatin-like protein of Olea europaea (Common olive).